The chain runs to 247 residues: Granulin (247 aa).

The protein belongs to the polyhedrin family.

Its function is as follows. Component of the virus occlusion bodies, which are large proteinaceous structures, that protect the virus from the outside environment for extended periods until they are ingested by insect larvae. The chain is Granulin from Pieris brassicae granulosis virus (PbGV).